A 560-amino-acid chain; its full sequence is Vesicular glutamate transporter 1 (560 aa).

The Cytoplasmic portion of the chain corresponds to 1-63 (MEFRQEEFRK…CTCFGLPRRY (63 aa)). Residues 64–84 (IIAIMSGLGFCISFGIRCNLG) traverse the membrane as a helical segment. Topologically, residues 85–116 (VAIVSMVNNSTTHRGGHVVMQKAQFNWDPETV) are extracellular. Residues 117 to 137 (GLIHGSFFWGYIVTQIPGGFI) form a helical membrane-spanning segment. The Cytoplasmic segment spans residues 138-140 (CQK). Residues 141-161 (FAANRVFGFAIVATSTLNMLI) traverse the membrane as a helical segment. Topologically, residues 162–169 (PSAARVHY) are extracellular. A helical transmembrane segment spans residues 170–190 (GCVIFVRILQGLVEGVTYPAC). Topologically, residues 191-208 (HGIWSKWAPPLERSRLAT) are cytoplasmic. Residues 209–229 (TAFCGSYAGAVVAMPLAGVLV) traverse the membrane as a helical segment. At 230-236 (QYSGWSS) the chain is on the extracellular side. Residues 237-257 (VFYVYGSFGIFWYLFWLLVSY) form a helical membrane-spanning segment. At 258–302 (ESPALHPSISEEERKYIEDAIGESAKLMNPVTKFNTPWRRFFTSM) the chain is on the cytoplasmic side. A helical membrane pass occupies residues 303–323 (PVYAIIVANFCRSWTFYLLLI). Topologically, residues 324–341 (SQPAYFEEVFGFEISKVG) are extracellular. A helical membrane pass occupies residues 342 to 362 (LVSALPHLVMTIIVPIGGQIA). The Cytoplasmic segment spans residues 363 to 378 (DFLRSRRIMSTTNVRK). A helical transmembrane segment spans residues 379 to 399 (LMNCGGFGMEATLLLVVGYSH). Residues 400–401 (SK) lie on the Extracellular side of the membrane. Residues 402–422 (GVAISFLVLAVGFSGFAISGF) form a helical membrane-spanning segment. At 423 to 435 (NVNHLDIAPRYAS) the chain is on the cytoplasmic side. A helical transmembrane segment spans residues 436-456 (ILMGISNGVGTLSGMVCPIIV). The Extracellular segment spans residues 457–469 (GAMTKHKTREEWQ). A helical membrane pass occupies residues 470–490 (YVFLIASLVHYGGVIFYGVFA). Topologically, residues 491–560 (SGEKQPWAEP…PRPPPPVRDY (70 aa)) are cytoplasmic. Positions 497–560 (WAEPEEMSEE…PRPPPPVRDY (64 aa)) are disordered. Residue serine 504 is modified to Phosphoserine. Positions 520–529 (DESEMEDEAE) are enriched in acidic residues. 2 stretches are compositionally biased toward pro residues: residues 531–540 (PGAPPAPPPS) and 550–560 (PPRPPPPVRDY).

It belongs to the major facilitator superfamily. Sodium/anion cotransporter family. VGLUT subfamily. As to quaternary structure, interacts with SHANK3.

The protein localises to the cytoplasmic vesicle. The protein resides in the secretory vesicle. Its subcellular location is the synaptic vesicle membrane. It localises to the cell membrane. It is found in the synapse. The protein localises to the synaptosome. The catalysed reaction is L-glutamate(out) = L-glutamate(in). It catalyses the reaction chloride(in) = chloride(out). The enzyme catalyses 3 Na(+)(out) + phosphate(out) = 3 Na(+)(in) + phosphate(in). It carries out the reaction phosphate(in) = phosphate(out). The catalysed reaction is K(+)(in) + H(+)(out) = K(+)(out) + H(+)(in). With respect to regulation, chloride channel activity is allosterically activated by lumenal H(+) and Cl(-) leading to synaptic vesicles acidification. The L-glutamate transport activity is allosterically activated by lumenal H(+) and Cl(-). The allosteric activation by H(+) efficiently prevents non-vesicular efflux across the plasma membrane, thereby restricting L-glutamate transport activity to acidic membranes such as synaptic vesicles. Its function is as follows. Multifunctional transporter that transports L-glutamate as well as multiple ions such as chloride, proton, potassium, sodium and phosphate. At the synaptic vesicle membrane, mainly functions as an uniporter which transports preferentially L-glutamate but also phosphate from the cytoplasm into synaptic vesicles at presynaptic nerve terminals of excitatory neural cells. The L-glutamate or phosphate uniporter activity is electrogenic and is driven by the proton electrochemical gradient, mainly by the electrical gradient established by the vacuolar H(+)-ATPase across the synaptic vesicle membrane. In addition, functions as a chloride channel that allows a chloride permeation through the synaptic vesicle membrane that affects the proton electrochemical gradient and promotes synaptic vesicles acidification. Moreover, may function as a K(+)/H(+) antiport allowing to maintain the electrical gradient and to decrease chemical gradient and therefore sustain vesicular glutamate uptake. The vesicular K(+)/H(+) antiport activity is electroneutral. At the plasma membrane, following exocytosis, functions as a symporter of Na(+) and phosphate from the extracellular space to the cytoplasm allowing synaptic phosphate homeostasis regulation. The symporter activity is driven by an inside negative membrane potential and is electrogenic. Is necessary for synaptic signaling of visual-evoked responses from photoreceptors. The chain is Vesicular glutamate transporter 1 from Bos taurus (Bovine).